The sequence spans 153 residues: Arachidonate 5-lipoxygenase-activating protein (153 aa).

Topologically, residues 1–8 (MDQEAVGN) are lumenal. A helical membrane pass occupies residues 9–30 (VVLLAIVTLISVVQNGFFAHKV). At 31–52 (EHESRNQNGRSFQRTGTLAFER) the chain is on the cytoplasmic side. The chain crosses the membrane as a helical span at residues 53-77 (VYTANQNCVDAYPTFLAVLWTAGLL). Over 78–80 (CSQ) the chain is Lumenal. A helical membrane pass occupies residues 81-102 (VPAAFAGLMYLFVRQKYFVGYL). The Cytoplasmic segment spans residues 103–107 (GERTQ). An intramembrane segment occupies 108–115 (STPGYIFG). The chain crosses the membrane as a helical span at residues 116–128 (KRIILFLFLMSLA). Residues 129–153 (GILNYCLILLFGSDFENYIKTISTT) are Lumenal-facing.

The protein belongs to the MAPEG family. Homotrimer. Interacts with LTC4S and ALOX5.

Its subcellular location is the nucleus membrane. It localises to the endoplasmic reticulum membrane. In terms of biological role, required for leukotriene biosynthesis by ALOX5 (5-lipoxygenase). Anchors ALOX5 to the membrane. Binds arachidonic acid, and could play an essential role in the transfer of arachidonic acid to ALOX5. Binds to MK-886, a compound that blocks the biosynthesis of leukotrienes. This is Arachidonate 5-lipoxygenase-activating protein (ALOX5AP) from Oryctolagus cuniculus (Rabbit).